A 283-amino-acid polypeptide reads, in one-letter code: Interferon alpha-inducible protein 27-like protein 2B (283 aa).

The N-terminal 90 residues, 1-90 (MKRKFVGAAI…AVGTATGARA (90 aa)), are a transit peptide targeting the mitochondrion. Residues 90–120 (AEGSMGASREQESGPQDPPQELQEPQEPPSC) are disordered. A run of 3 helical transmembrane segments spans residues 130–150 (FVGAAIGGALAVAGAPIALSA), 176–196 (GGGIAAGGLVATLQSVGILGL), and 202–222 (IILGAVGAATGATAAGAMGAC). The tract at residues 227-283 (PGLQDLQQEPKEPQEPQELQKQQEPQEPQELQKQQETQETQETQELQKTQEPPSYEK) is disordered. Positions 242-283 (PQELQKQQEPQEPQELQKQQETQETQETQELQKTQEPPSYEK) are enriched in low complexity.

This sequence belongs to the IFI6/IFI27 family. As to quaternary structure, homooligomer. Interacts with BAK1. Interacts with BAX. Interacts with adenine nucleotide translocase.

Its subcellular location is the mitochondrion inner membrane. In terms of biological role, functions in the intrinsic apoptotic signaling pathway and may have an interferon-induced antiviral activity. This chain is Interferon alpha-inducible protein 27-like protein 2B, found in Mus musculus (Mouse).